The chain runs to 816 residues: Phosphatidylinositol 4-kinase beta (816 aa).

Disordered regions lie at residues 1–30, 101–120, and 248–318; these read MGDTIVEPAPLKPTSEPAPGPPGNNGGSLL, EDEMGATVASGTAKGARRRR, and AHRK…SFSS. At Gly-2 the chain carries N-acetylglycine. Positions 2-68 are interaction with ACBD3; the sequence is GDTIVEPAPL…VKLLHGGVAI (67 aa). Residues 29-242 enclose the PIK helical domain; it reads LLSVITEGVG…GTKLRKLILS (214 aa). Position 258 is a phosphoserine (Ser-258). Residue Thr-263 is modified to Phosphothreonine. Ser-266, Ser-275, Ser-277, Ser-284, and Ser-294 each carry phosphoserine. Polar residues-rich tracts occupy residues 278 to 297 and 306 to 318; these read DATASISLSSNLKRTASNPK and SSSTESIDNSFSS. Ser-428 is subject to Phosphoserine. At Thr-438 the chain carries Phosphothreonine. Phosphoserine is present on Ser-511. Phosphothreonine is present on residues Thr-517 and Thr-519. Residues 535–801 form the PI3K/PI4K catalytic domain; it reads EPWQEKVRRI…MVDGSMRSIT (267 aa). The tract at residues 541–547 is G-loop; sequence VRRIREG. The segment at 668–676 is catalytic loop; that stretch reads QVKDRHNGN. The tract at residues 687–711 is activation loop; the sequence is HIDFGFILSSSPRNLGFETSAFKLT.

The protein belongs to the PI3/PI4-kinase family. Type III PI4K subfamily. Interacts with ARF1 and ARF3 in the Golgi complex, but not with ARF4, ARF5 or ARF6. Interacts with NCS1/FREQ in a calcium-independent manner. Interacts with CALN1/CABP8 and CALN2/CABP7; in a calcium-dependent manner; this interaction competes with NCS1/FREQ binding. Interacts with ACBD3. Interacts with ARMH3, YWHAB, YWHAE, YWHAG, YWHAH, YWHAQ, YWHAZ and SFN. Interacts with GGA2 (via VHS domain); the interaction is important for PI4KB location at the Golgi apparatus membrane. Interacts with ATG9A. It depends on Mg(2+) as a cofactor. The cofactor is Mn(2+).

The protein resides in the endomembrane system. The protein localises to the mitochondrion outer membrane. Its subcellular location is the rough endoplasmic reticulum membrane. It is found in the golgi apparatus. It localises to the golgi apparatus membrane. It carries out the reaction a 1,2-diacyl-sn-glycero-3-phospho-(1D-myo-inositol) + ATP = a 1,2-diacyl-sn-glycero-3-phospho-(1D-myo-inositol 4-phosphate) + ADP + H(+). With respect to regulation, inhibited by wortmannin. Increased kinase activity upon interaction with NCS1/FREQ. Functionally, phosphorylates phosphatidylinositol (PI) in the first committed step in the production of the second messenger inositol-1,4,5,-trisphosphate (PIP). May regulate Golgi disintegration/reorganization during mitosis, possibly via its phosphorylation. Involved in Golgi-to-plasma membrane trafficking. The polypeptide is Phosphatidylinositol 4-kinase beta (PI4KB) (Bos taurus (Bovine)).